The sequence spans 230 residues: Ion-translocating oxidoreductase complex subunit E (230 aa).

The next 6 helical transmembrane spans lie at 18–38 (ALVQLLGMCPLLAVTSTATNA), 39–59 (LGLGLATTLVLTLTNLTISAL), 63–83 (TPAEIRIPIYVMIIASVVSAV), 86–106 (LINAYAFGLYQSLGIFIPLIV), 125–145 (ALSALDGFSIGMGATGAMFVL), and 182–202 (PFLLAMLPPGAFIGLGLMLAV).

This sequence belongs to the NqrDE/RnfAE family. As to quaternary structure, the complex is composed of six subunits: RnfA, RnfB, RnfC, RnfD, RnfE and RnfG.

It localises to the cell inner membrane. Functionally, part of a membrane-bound complex that couples electron transfer with translocation of ions across the membrane. This Citrobacter koseri (strain ATCC BAA-895 / CDC 4225-83 / SGSC4696) protein is Ion-translocating oxidoreductase complex subunit E.